The sequence spans 53 residues: Dihydrolipoyl dehydrogenase (53 aa).

FAD-binding positions include 35–44 (EKYPTFGGTC) and K53. A disulfide bridge connects residues C44 and C49.

This sequence belongs to the class-I pyridine nucleotide-disulfide oxidoreductase family. Homodimer. It depends on FAD as a cofactor.

It is found in the mitochondrion. The enzyme catalyses N(6)-[(R)-dihydrolipoyl]-L-lysyl-[protein] + NAD(+) = N(6)-[(R)-lipoyl]-L-lysyl-[protein] + NADH + H(+). Lipoamide reduction and the NADH -&gt; NAD reaction are both completely inhibited by copper and cadmium ions. Lipoamide dehydrogenase is a component of the glycine cleavage system as well as of the alpha-ketoacid dehydrogenase complexes. This enzyme has lipoamide dehydrogenase activity and NADH -&gt; NAD transhydrogenation activity. Also displays some NADH-ferricyanide reductase and NADPH -&gt; NAD transydrogenation activities. The polypeptide is Dihydrolipoyl dehydrogenase (Hymenolepis diminuta (Rat tapeworm)).